The chain runs to 499 residues: MIDRGALMSRYSRASDPDIRSVFHREFEGNQKRSEDFYRRIFLEYGDESIAELVTAQVGIQNVSNVISKVIEEIRIGLSYLEKSTRYVAYDRKVDGHYLFMQAEKIGLSGEAAREYTDLCNRLFDLYSSTLPRIEEEISRQWPIESFDFNIDGNPRNYKELDENGRKLAQKSYRSSVRSRALDDARFILPASTLTNMGVSGNGRSFIHLIQKLMEYGVPESERLAHDLYEELKGEFPQIIDDALSQHGQDIINYKRSLASLFPYTDGGRFEKVRLIKYSNEREEMQKVLALLMYPFAEDASGIISRIKAMELSEASAILERIRDLRKNRRMKVGRPFEAVNYVFEVTTNYGAFRDLQRHRFLSIVRKPLTVSYGFDVPPIIAKMPDLSEEYAEAMKDAERVYRIIKERYGAWIAQYAVPFAYRYPVVFTTNLAEATYFIELRSTPQAHFDLRDIAIRMYNEIKSVHPSLAGIIKFVDTGDYPLGRLSAEVRKNVKAGGI.

ThyX domains lie at 1-246 (MIDR…ALSQ) and 271-476 (EKVR…IKFV).

This sequence belongs to the UPF0159 family.

In Thermoplasma acidophilum (strain ATCC 25905 / DSM 1728 / JCM 9062 / NBRC 15155 / AMRC-C165), this protein is UPF0159 protein Ta1429.